A 148-amino-acid polypeptide reads, in one-letter code: Mediator of RNA polymerase II transcription subunit 31 (148 aa).

Belongs to the Mediator complex subunit 31 family. As to quaternary structure, component of the Mediator complex.

The protein localises to the nucleus. Functionally, component of the Mediator complex, a coactivator involved in the regulated transcription of nearly all RNA polymerase II-dependent genes. Mediator functions as a bridge to convey information from gene-specific regulatory proteins to the basal RNA polymerase II transcription machinery. Mediator is recruited to promoters by direct interactions with regulatory proteins and serves as a scaffold for the assembly of a functional preinitiation complex with RNA polymerase II and the general transcription factors. The sequence is that of Mediator of RNA polymerase II transcription subunit 31 from Taenia solium (Pork tapeworm).